The following is a 484-amino-acid chain: Muscarinic acetylcholine receptor M4 (484 aa).

Topologically, residues 1 to 32 are extracellular; it reads MENDTWENESSASNHSIDETIVEIPGKYQTME. N-linked (GlcNAc...) asparagine glycans are attached at residues Asn-3, Asn-8, and Asn-14. The helical transmembrane segment at 33–55 threads the bilayer; sequence MIFIATVTGSLSLVTVVGNILVM. Over 56 to 69 the chain is Cytoplasmic; that stretch reads LSIKVNRQLQTVNN. The chain crosses the membrane as a helical span at residues 70-90; the sequence is YFLFSLACADLIIGVFSMNLY. The Extracellular portion of the chain corresponds to 91-107; it reads SLYIIKGYWPLGPIVCD. The cysteines at positions 106 and 186 are disulfide-linked. Residues 108–129 form a helical membrane-spanning segment; the sequence is LWLALDYVVSNASVMNLLIISL. Topologically, residues 130 to 149 are cytoplasmic; it reads ERXFCVTKPLTYPARRTTKM. A helical membrane pass occupies residues 150 to 172; the sequence is AGLMIAAAWLLSFELWAPAILFW. Residues 173–194 lie on the Extracellular side of the membrane; the sequence is QFIVGQRTVPSGECYIQFLSNP. The helical transmembrane segment at 195-217 threads the bilayer; it reads AVTFGTAIAAFYLPVVIMTILYI. Topologically, residues 218–406 are cytoplasmic; that stretch reads HISLASRSRV…AAREKKVTRT (189 aa). A disordered region spans residues 255 to 316; that stretch reads NIPKQDAGDK…EKQPLSEASS (62 aa). Residues 260–270 show a composition bias toward basic and acidic residues; sequence DAGDKVVEKKN. The chain crosses the membrane as a helical span at residues 407–427; sequence IFAILLAFIITWTPYNVMVLI. At 428-441 the chain is on the extracellular side; sequence NTFCQTCIPETIWY. The helical transmembrane segment at 442–461 threads the bilayer; it reads IGYWLCYVNSTINPACYALC. At 462–484 the chain is on the cytoplasmic side; that stretch reads NATFKKTFKHLLMCQYKSIGTAR.

This sequence belongs to the G-protein coupled receptor 1 family. Muscarinic acetylcholine receptor subfamily. CHRM4 sub-subfamily.

Its subcellular location is the cell membrane. The protein resides in the postsynaptic cell membrane. Its function is as follows. The muscarinic acetylcholine receptor mediates various cellular responses, including inhibition of adenylate cyclase, breakdown of phosphoinositides and modulation of potassium channels through the action of G proteins. Primary transducing effect is inhibition of adenylate cyclase. The protein is Muscarinic acetylcholine receptor M4 (chrm4) of Xenopus laevis (African clawed frog).